Here is a 344-residue protein sequence, read N- to C-terminus: Melanocyte-stimulating hormone receptor (344 aa).

Residues 1–37 (MPMQGAQRKLLGSLNSTPTATSNPGLAANHTGAPCLE) lie on the Extracellular side of the membrane. N-linked (GlcNAc...) asparagine glycosylation is present at Asn29. The chain crosses the membrane as a helical span at residues 38 to 63 (VSIPDGLFLSLGLVSLVENVLVVAAI). The Cytoplasmic segment spans residues 64 to 72 (AKNRNLHSS). The chain crosses the membrane as a helical span at residues 73 to 93 (MYYFICCLALSDLLVSGSNML). Residues 94-118 (ETAIILLLEAGTLATRASVVQQLHN) are Extracellular-facing. The helical transmembrane segment at 119–140 (TIDVLTCSSMLCSLCFLGAIAV) threads the bilayer. Over 141–163 (DRYISIFYALRYHSIMTLPRAQR) the chain is Cytoplasmic. Residues 164-183 (AIAAIWVASVLSSTLFITYY) traverse the membrane as a helical segment. The Extracellular segment spans residues 184–191 (DHAAVLLC). The helical transmembrane segment at 192–211 (LVVFFLAMLVLMAVLYVHML) threads the bilayer. The Cytoplasmic segment spans residues 212–240 (ARACQHAQGIIRLHNRQLPAHKGFGLRGA). The helical transmembrane segment at 241-266 (ATLTILLGIFFLCWGPFFLHLTLVVF) threads the bilayer. Residues 267 to 279 (CPQHLTCNCIFKN) lie on the Extracellular side of the membrane. The chain crosses the membrane as a helical span at residues 280 to 300 (FKVFLTLIICNTIIDPLIYAF). The Cytoplasmic segment spans residues 301–344 (RSQELRRTLKEVLLCSSWPGCWAEGGGDSVWPGSCVTLRGPLPP). The S-palmitoyl cysteine moiety is linked to residue Cys315.

Belongs to the G-protein coupled receptor 1 family. In terms of assembly, interacts with MGRN1, but does not undergo MGRN1-mediated ubiquitination; this interaction competes with GNAS-binding and thus inhibits agonist-induced cAMP production. Interacts with OPN3; the interaction results in a decrease in MC1R-mediated cAMP signaling and ultimately a decrease in melanin production in melanocytes.

The protein resides in the cell membrane. In terms of biological role, receptor for MSH (alpha, beta and gamma) and ACTH. The activity of this receptor is mediated by G proteins which activate adenylate cyclase. Mediates melanogenesis, the production of eumelanin (black/brown) and phaeomelanin (red/yellow), via regulation of cAMP signaling in melanocytes. This Callithrix jacchus (White-tufted-ear marmoset) protein is Melanocyte-stimulating hormone receptor (MC1R).